A 274-amino-acid polypeptide reads, in one-letter code: Acetyl-coenzyme A carboxylase carboxyl transferase subunit alpha (274 aa).

Positions 1-245 (MENSQELTPW…RENLKKAIEG (245 aa)) constitute a CoA carboxyltransferase C-terminal domain.

This sequence belongs to the AccA family. Acetyl-CoA carboxylase is a heterohexamer composed of biotin carboxyl carrier protein (AccB), biotin carboxylase (AccC) and two subunits each of ACCase subunit alpha (AccA) and ACCase subunit beta (AccD).

Its subcellular location is the cytoplasm. It carries out the reaction N(6)-carboxybiotinyl-L-lysyl-[protein] + acetyl-CoA = N(6)-biotinyl-L-lysyl-[protein] + malonyl-CoA. It functions in the pathway lipid metabolism; malonyl-CoA biosynthesis; malonyl-CoA from acetyl-CoA: step 1/1. Component of the acetyl coenzyme A carboxylase (ACC) complex. First, biotin carboxylase catalyzes the carboxylation of biotin on its carrier protein (BCCP) and then the CO(2) group is transferred by the carboxyltransferase to acetyl-CoA to form malonyl-CoA. This is Acetyl-coenzyme A carboxylase carboxyl transferase subunit alpha from Clostridium acetobutylicum (strain ATCC 824 / DSM 792 / JCM 1419 / IAM 19013 / LMG 5710 / NBRC 13948 / NRRL B-527 / VKM B-1787 / 2291 / W).